The primary structure comprises 233 residues: Large ribosomal subunit protein bL19c (233 aa).

The N-terminal 77 residues, 1–77 (MASKVLPQAL…FPARNSFVVR (77 aa)), are a transit peptide targeting the chloroplast.

Component of the chloroplast large ribosomal subunit (LSU). Mature 70S chloroplast ribosomes of higher plants consist of a small (30S) and a large (50S) subunit. The 30S small subunit contains 1 molecule of ribosomal RNA (16S rRNA) and 24 different proteins. The 50S large subunit contains 3 rRNA molecules (23S, 5S and 4.5S rRNA) and 33 different proteins.

It localises to the plastid. It is found in the chloroplast. In terms of biological role, component of the chloroplast ribosome (chloro-ribosome), a dedicated translation machinery responsible for the synthesis of chloroplast genome-encoded proteins, including proteins of the transcription and translation machinery and components of the photosynthetic apparatus. In Spinacia oleracea (Spinach), this protein is Large ribosomal subunit protein bL19c (RPL19).